A 396-amino-acid polypeptide reads, in one-letter code: Elongation factor Tu (396 aa).

The region spanning 10 to 205 (KSHANIGTIG…AVDEYIPTPE (196 aa)) is the tr-type G domain. A G1 region spans residues 19–26 (GHVDHGKT). 19 to 26 (GHVDHGKT) is a GTP binding site. Thr-26 contacts Mg(2+). The tract at residues 61-65 (GITIS) is G2. The tract at residues 82 to 85 (DCPG) is G3. GTP-binding positions include 82-86 (DCPGH) and 137-140 (NKCD). Residues 137–140 (NKCD) form a G4 region. The segment at 175–177 (SAL) is G5.

It belongs to the TRAFAC class translation factor GTPase superfamily. Classic translation factor GTPase family. EF-Tu/EF-1A subfamily. Monomer.

Its subcellular location is the cytoplasm. It carries out the reaction GTP + H2O = GDP + phosphate + H(+). In terms of biological role, GTP hydrolase that promotes the GTP-dependent binding of aminoacyl-tRNA to the A-site of ribosomes during protein biosynthesis. This Bacillus licheniformis (strain ATCC 14580 / DSM 13 / JCM 2505 / CCUG 7422 / NBRC 12200 / NCIMB 9375 / NCTC 10341 / NRRL NRS-1264 / Gibson 46) protein is Elongation factor Tu.